Here is a 162-residue protein sequence, read N- to C-terminus: Interleukin-15 (162 aa).

The first 29 residues, 1–29, serve as a signal peptide directing secretion; it reads MRILKPYLRSTSIQCYLCLLLNSHFLTEA. A propeptide spanning residues 30-48 is cleaved from the precursor; the sequence is CIPVFILSCINAGLPKTEA. Cystine bridges form between Cys83-Cys133 and Cys90-Cys136. N-linked (GlcNAc...) asparagine glycans are attached at residues Asn104 and Asn127.

It belongs to the IL-15/IL-21 family.

It is found in the secreted. In terms of biological role, cytokine that plays a major role in the development of inflammatory and protective immune responses to microbial invaders and parasites by modulating immune cells of both the innate and adaptive immune systems. Stimulates the proliferation of natural killer cells, T-cells and B-cells and promotes the secretion of several cytokines. In monocytes, induces the production of IL8 and monocyte chemotactic protein 1/CCL2, two chemokines that attract neutrophils and monocytes respectively to sites of infection. Unlike most cytokines, which are secreted in soluble form, IL15 is expressed in association with its high affinity IL15RA on the surface of IL15-producing cells and delivers signals to target cells that express IL2RB and IL2RG receptor subunits. Binding to its receptor triggers the phosphorylation of JAK1 and JAK3 and the recruitment and subsequent phosphorylation of signal transducer and activator of transcription-3/STAT3 and STAT5. In mast cells, induces the rapid tyrosine phosphorylation of STAT6 and thereby controls mast cell survival and release of cytokines such as IL4. The chain is Interleukin-15 (IL15) from Felis catus (Cat).